Reading from the N-terminus, the 644-residue chain is uncharacterized protein (644 aa).

254–261 (GKMGAGKS) contacts ATP.

This is an uncharacterized protein from Bacillus anthracis.